A 174-amino-acid chain; its full sequence is ATP synthase subunit b 2 (174 aa).

Residues 27–47 (IFWLIITLVAIYLILTKVALP) traverse the membrane as a helical segment.

Belongs to the ATPase B chain family. F-type ATPases have 2 components, F(1) - the catalytic core - and F(0) - the membrane proton channel. F(1) has five subunits: alpha(3), beta(3), gamma(1), delta(1), epsilon(1). F(0) has three main subunits: a(1), b(2) and c(10-14). The alpha and beta chains form an alternating ring which encloses part of the gamma chain. F(1) is attached to F(0) by a central stalk formed by the gamma and epsilon chains, while a peripheral stalk is formed by the delta and b chains.

It is found in the cell inner membrane. Functionally, f(1)F(0) ATP synthase produces ATP from ADP in the presence of a proton or sodium gradient. F-type ATPases consist of two structural domains, F(1) containing the extramembraneous catalytic core and F(0) containing the membrane proton channel, linked together by a central stalk and a peripheral stalk. During catalysis, ATP synthesis in the catalytic domain of F(1) is coupled via a rotary mechanism of the central stalk subunits to proton translocation. Its function is as follows. Component of the F(0) channel, it forms part of the peripheral stalk, linking F(1) to F(0). The b'-subunit is a diverged and duplicated form of b found in plants and photosynthetic bacteria. This chain is ATP synthase subunit b 2 (atpF2), found in Dinoroseobacter shibae (strain DSM 16493 / NCIMB 14021 / DFL 12).